Reading from the N-terminus, the 237-residue chain is Leucyl/phenylalanyl-tRNA--protein transferase (237 aa).

It belongs to the L/F-transferase family.

It is found in the cytoplasm. The enzyme catalyses N-terminal L-lysyl-[protein] + L-leucyl-tRNA(Leu) = N-terminal L-leucyl-L-lysyl-[protein] + tRNA(Leu) + H(+). It catalyses the reaction N-terminal L-arginyl-[protein] + L-leucyl-tRNA(Leu) = N-terminal L-leucyl-L-arginyl-[protein] + tRNA(Leu) + H(+). The catalysed reaction is L-phenylalanyl-tRNA(Phe) + an N-terminal L-alpha-aminoacyl-[protein] = an N-terminal L-phenylalanyl-L-alpha-aminoacyl-[protein] + tRNA(Phe). In terms of biological role, functions in the N-end rule pathway of protein degradation where it conjugates Leu, Phe and, less efficiently, Met from aminoacyl-tRNAs to the N-termini of proteins containing an N-terminal arginine or lysine. In Vibrio vulnificus (strain CMCP6), this protein is Leucyl/phenylalanyl-tRNA--protein transferase (aat).